We begin with the raw amino-acid sequence, 326 residues long: Sporulation-specific wall maturation protein (326 aa).

Positions M1–A18 are cleaved as a signal peptide. The 306-residue stretch at T19–S324 folds into the Asparaginase/glutaminase domain. N-linked (GlcNAc...) asparagine glycans are attached at residues N26, N50, N58, N64, N76, N108, N181, N190, N199, N205, N248, and N281.

It to yeast YGP1.

In terms of biological role, serves a protective function during the early stages of spore wall formation, and contributes to spore wall maturation. The polypeptide is Sporulation-specific wall maturation protein (SPS100) (Saccharomyces cerevisiae (strain ATCC 204508 / S288c) (Baker's yeast)).